Consider the following 611-residue polypeptide: MFS siderochrome iron transporter C (611 aa).

The interval 1 to 25 (MPFLDHRTGPSYGTIDQMEQHSDDE) is disordered. Asn-62 carries N-linked (GlcNAc...) asparagine glycosylation. The next 14 membrane-spanning stretches (helical) occupy residues 71–91 (VIAY…GQTV), 107–127 (LIST…PPMA), 136–156 (FEAF…MAAS), 165–185 (AQIF…VFIA), 194–214 (AFLA…GPTI), 228–248 (YGMW…SLLL), 282–302 (MGGL…LTLA), 313–333 (SIVA…FWES), 353–373 (ALAG…SVQP), 393–413 (VTQT…ILIK), 418–438 (YRAF…LMMV), 449–469 (ILVT…PVQL), 486–506 (MFLT…GAVW), and 560–580 (LLIL…AMED). A disordered region spans residues 592-611 (VDPVPAEEGEIEPNRHVKRT).

It belongs to the major facilitator superfamily.

Its subcellular location is the membrane. Functionally, major facilitator transporter that contributes to the maintenance of intracellular siderophore ferricrocin (FC) levels. Plays a role in conidiation and confers protection against oxidative stress. Also contributes to fungal virulence in the Galleria mellonella animal model system. Does not appear to play a role in either siderophore export or uptake. This chain is MFS siderochrome iron transporter C, found in Aspergillus fumigatus (strain ATCC MYA-4609 / CBS 101355 / FGSC A1100 / Af293) (Neosartorya fumigata).